The following is a 515-amino-acid chain: Integrator complex subunit 14 (515 aa).

Positions 2–204 (PTVVVMDVSL…KNVQSMFGKL (203 aa)) constitute a VWFA domain. Mg(2+) is bound by residues S10, S12, and T86. K418 is modified (N6-acetyllysine).

Belongs to the Integrator subunit 14 family. As to quaternary structure, component of the Integrator complex, composed of core subunits INTS1, INTS2, INTS3, INTS4, INTS5, INTS6, INTS7, INTS8, INTS9/RC74, INTS10, INTS11/CPSF3L, INTS12, INTS13, INTS14 and INTS15. The core complex associates with protein phosphatase 2A subunits PPP2CA and PPP2R1A, to form the Integrator-PP2A (INTAC) complex. INTS14 is part of the tail subcomplex, composed of INTS10, INTS13, INTS14 and INTS15.

It localises to the nucleus. Component of the integrator complex, a multiprotein complex that terminates RNA polymerase II (Pol II) transcription in the promoter-proximal region of genes. The integrator complex provides a quality checkpoint during transcription elongation by driving premature transcription termination of transcripts that are unfavorably configured for transcriptional elongation: the complex terminates transcription by (1) catalyzing dephosphorylation of the C-terminal domain (CTD) of Pol II subunit POLR2A/RPB1 and SUPT5H/SPT5, (2) degrading the exiting nascent RNA transcript via endonuclease activity and (3) promoting the release of Pol II from bound DNA. The integrator complex is also involved in terminating the synthesis of non-coding Pol II transcripts, such as enhancer RNAs (eRNAs), small nuclear RNAs (snRNAs), telomerase RNAs and long non-coding RNAs (lncRNAs). Within the integrator complex, INTS14 is part of the integrator tail module that acts as a platform for the recruitment of transcription factors at promoters. In Mus musculus (Mouse), this protein is Integrator complex subunit 14.